The chain runs to 97 residues: DNA/RNA-binding protein Alba 1 (97 aa).

Ser-2 is subject to N-acetylserine; by ard1 acetylase. Residues Lys-16, Lys-17, and Tyr-22 each coordinate RNA. Lys-16 carries the post-translational modification N6,N6,N6-trimethyllysine; alternate. Position 16 is an N6,N6-dimethyllysine; alternate (Lys-16). Lys-16 is modified (N6-acetyllysine; alternate). Lys-16 is subject to N6-methyllysine; alternate. Position 31 is a deamidated asparagine; partial (Asn-31). Gln-32 carries the post-translational modification Deamidated glutamine; partial. Lys-40 is subject to N6-methyllysine; partial. Arg-42 and Arg-44 together coordinate RNA. At Lys-48 the chain carries N6-acetyllysine; partial. Residue Asp-51 is modified to Aspartate methyl ester; partial. The residue at position 58 (Asn-58) is a Deamidated asparagine; partial. At Lys-64 the chain carries N6-acetyllysine; alternate; partial. The residue at position 64 (Lys-64) is an N6-methyllysine; alternate; partial. At Lys-68 the chain carries N6-acetyllysine; partial. At Gln-75 the chain carries N5-methylglutamine; partial. Asp-81 carries the post-translational modification Aspartate methyl ester; partial. At Lys-97 the chain carries N6-methyllysine; partial.

Belongs to the histone-like Alba family. As to quaternary structure, forms homodimers and higher order oligomers, e.g. homotetramers. In terms of processing, acetylated. Acetylation at Lys-16 by the Pat acetylase decreases DNA-binding affinity. Deacetylation at Lys-16 by the CobB deacetylase increases DNA-binding affinity. Acetylation at Ser-2 is involved in the regulation of the turnover of the protein.

The protein localises to the cytoplasm. Its subcellular location is the chromosome. In terms of biological role, binds double-stranded DNA tightly but without sequence specificity. Involved in DNA compaction. Possesses DNA endonuclease activity. Prevents transcription after DNA binding. Binds single-stranded DNA and RNA in vitro. Binds rRNA and mRNA in vivo. May play a role in maintaining the structural and functional stability of RNA, and, perhaps, ribosomes. Binds double-stranded RNA (dsRNA) and exhibits RNA chaperone activity. Required for normal growth. In Saccharolobus islandicus (strain REY15A) (Sulfolobus islandicus), this protein is DNA/RNA-binding protein Alba 1.